We begin with the raw amino-acid sequence, 323 residues long: Acetyl esterase (323 aa).

The Involved in the stabilization of the negatively charged intermediate by the formation of the oxyanion hole signature appears at 91 to 93; it reads HGG. Active-site residues include serine 165, aspartate 262, and histidine 292.

Belongs to the 'GDXG' lipolytic enzyme family. Homodimer. Interacts with MalT and MelA.

Its subcellular location is the cytoplasm. In terms of biological role, displays esterase activity towards short chain fatty esters (acyl chain length of up to 8 carbons). Able to hydrolyze triacetylglycerol (triacetin) and tributyrylglycerol (tributyrin), but not trioleylglycerol (triolein) or cholesterol oleate. Negatively regulates MalT activity by antagonizing maltotriose binding. Inhibits MelA galactosidase activity. This Salmonella typhi protein is Acetyl esterase.